The following is a 229-amino-acid chain: 7-cyano-7-deazaguanine synthase (229 aa).

15–25 is an ATP binding site; sequence LSGGLDSTTCL. 4 residues coordinate Zn(2+): cysteine 192, cysteine 202, cysteine 205, and cysteine 208.

The protein belongs to the QueC family. Zn(2+) is required as a cofactor.

It catalyses the reaction 7-carboxy-7-deazaguanine + NH4(+) + ATP = 7-cyano-7-deazaguanine + ADP + phosphate + H2O + H(+). It functions in the pathway purine metabolism; 7-cyano-7-deazaguanine biosynthesis. Its function is as follows. Catalyzes the ATP-dependent conversion of 7-carboxy-7-deazaguanine (CDG) to 7-cyano-7-deazaguanine (preQ(0)). This is 7-cyano-7-deazaguanine synthase from Acinetobacter baylyi (strain ATCC 33305 / BD413 / ADP1).